Consider the following 481-residue polypeptide: tRNA:m(4)X modification enzyme TRM13 homolog (481 aa).

Ala-2 carries the N-acetylalanine modification. The CHHC U11-48K-type zinc finger occupies 56–83 (RILCPLDPKHTVYEDQLAKHLKKCNSRE). The Zn(2+) site is built by Cys-59, His-65, His-75, and Cys-79. A coiled-coil region spans residues 113–140 (SLSEEQLEKLIKKLRKASEGLNSTLKDH). Positions 381–408 (ETSNSTTKRQDNQNDDSEEHDDGGYRIT) are disordered.

Belongs to the methyltransferase TRM13 family.

The catalysed reaction is cytidine(4) in tRNA(Pro) + S-adenosyl-L-methionine = 2'-O-methylcytidine(4) in tRNA(Pro) + S-adenosyl-L-homocysteine + H(+). It carries out the reaction cytidine(4) in tRNA(Gly)(GCC) + S-adenosyl-L-methionine = 2'-O-methylcytidine(4) in tRNA(Gly)(GCC) + S-adenosyl-L-homocysteine + H(+). It catalyses the reaction adenosine(4) in tRNA(His) + S-adenosyl-L-methionine = 2'-O-methyladenosine(4) in tRNA(His) + S-adenosyl-L-homocysteine + H(+). TRNA methylase which 2'-O-methylates cytidine(4) in tRNA(Pro) and tRNA(Gly)(GCC), and adenosine(4) in tRNA(His). This Homo sapiens (Human) protein is tRNA:m(4)X modification enzyme TRM13 homolog (TRMT13).